A 138-amino-acid chain; its full sequence is Large ribosomal subunit protein uL16 (138 aa).

Residues M1 to G19 show a composition bias toward basic residues. A disordered region spans residues M1–A21.

This sequence belongs to the universal ribosomal protein uL16 family. Part of the 50S ribosomal subunit.

In terms of biological role, binds 23S rRNA and is also seen to make contacts with the A and possibly P site tRNAs. This Granulibacter bethesdensis (strain ATCC BAA-1260 / CGDNIH1) protein is Large ribosomal subunit protein uL16.